The primary structure comprises 499 residues: Phenylalanine--tRNA ligase alpha subunit (499 aa).

L-phenylalanine-binding positions include T342, 381–383 (QID), and F422. Residue E424 coordinates Mg(2+). An L-phenylalanine-binding site is contributed by F447.

It belongs to the class-II aminoacyl-tRNA synthetase family. Phe-tRNA synthetase alpha subunit type 2 subfamily. As to quaternary structure, tetramer of two alpha and two beta subunits. Mg(2+) is required as a cofactor.

It localises to the cytoplasm. It carries out the reaction tRNA(Phe) + L-phenylalanine + ATP = L-phenylalanyl-tRNA(Phe) + AMP + diphosphate + H(+). This is Phenylalanine--tRNA ligase alpha subunit from Pyrococcus furiosus (strain ATCC 43587 / DSM 3638 / JCM 8422 / Vc1).